The primary structure comprises 440 residues: Adenylosuccinate synthetase (440 aa).

GTP-binding positions include 13-19 (GDEGKGK) and 41-43 (GHT). Asp-14 serves as the catalytic Proton acceptor. Positions 14 and 41 each coordinate Mg(2+). IMP-binding positions include 14–17 (DEGK), 39–42 (NAGH), Thr-135, Arg-149, Gln-230, Thr-245, and Arg-313. The Proton donor role is filled by His-42. 309-315 (TVTKRKR) contributes to the substrate binding site. GTP-binding positions include Arg-315, 341 to 343 (KLD), and 423 to 425 (STG).

This sequence belongs to the adenylosuccinate synthetase family. In terms of assembly, homodimer. The cofactor is Mg(2+).

It localises to the cytoplasm. It carries out the reaction IMP + L-aspartate + GTP = N(6)-(1,2-dicarboxyethyl)-AMP + GDP + phosphate + 2 H(+). It functions in the pathway purine metabolism; AMP biosynthesis via de novo pathway; AMP from IMP: step 1/2. Its function is as follows. Plays an important role in the de novo pathway of purine nucleotide biosynthesis. Catalyzes the first committed step in the biosynthesis of AMP from IMP. This is Adenylosuccinate synthetase from Methylobacillus flagellatus (strain ATCC 51484 / DSM 6875 / VKM B-1610 / KT).